The primary structure comprises 376 residues: Putative glutamate--cysteine ligase 2-1 (376 aa).

The protein belongs to the glutamate--cysteine ligase type 2 family. YbdK subfamily.

The catalysed reaction is L-cysteine + L-glutamate + ATP = gamma-L-glutamyl-L-cysteine + ADP + phosphate + H(+). In terms of biological role, ATP-dependent carboxylate-amine ligase which exhibits weak glutamate--cysteine ligase activity. This chain is Putative glutamate--cysteine ligase 2-1, found in Mycobacterium sp. (strain KMS).